Here is a 170-residue protein sequence, read N- to C-terminus: Regulator of ribonuclease activity A (170 aa).

This sequence belongs to the RraA family. As to quaternary structure, homotrimer. Binds to both RNA-binding sites in the C-terminal region of Rne and to RhlB.

The protein resides in the cytoplasm. Functionally, globally modulates RNA abundance by binding to RNase E (Rne) and regulating its endonucleolytic activity. Can modulate Rne action in a substrate-dependent manner by altering the composition of the degradosome. Modulates RNA-binding and helicase activities of the degradosome. The chain is Regulator of ribonuclease activity A from Psychromonas ingrahamii (strain DSM 17664 / CCUG 51855 / 37).